The primary structure comprises 623 residues: MFDFEYQLKNLPDKPGVYIMKNSLGEVIYVGKAKILKNRVRQYFRNSKNHSEKVKAMVKNISEFEYIVTDSEIEALILECNLIKKYKPRYNILLKDDKHYPFIKVTMNEDFPRIIVTRNMVKDGSKYFGPYPDVSAVHETVDLMRRIFPIRTCKKYIKENGENIRPCLNYHIKRCNAPCAGLISKEEYGEIIKKAVGLISGKNNDIIRELKEEMEKASMNLDFEKAADLRDKMLAAQKVTEKQKIIIGNFENEDYISLYSDEKDSCVQVFFLREGKIVGREHFIVENTAGENEGDIIGEFIKEFYSGTAYVPKSIYASAGEDLNLLENWLTMKRGSKVEIKIPQKGEKKDIIEMVKRNSKITLEKFKIKLLSDKRLNENILIEMTEVIGLEEVPHRIEAYDISNIQGVDSVGSMIVFEEGKPKNSDYRRFKIKTVKGANDYDSMREILTRRFKHGLEEVNSIVNKNLSLSAGKFCVFPDLILMDGGKGQVNIALEVLKEFNIDIPVCGMVKDDRHNTRGIIYNNNEIDIKSNRKIINFVTRVQDEVHRFAITYHRSLRDKRVLHSVLDDIPYIGEKRRKALLKHFGSIENIKKATYEELMKTPSIDKKAAESIVSYFRGRKGE.

Positions 13–92 (DKPGVYIMKN…IKKYKPRYNI (80 aa)) constitute a GIY-YIG domain. The region spanning 204–239 (NDIIRELKEEMEKASMNLDFEKAADLRDKMLAAQKV) is the UVR domain.

This sequence belongs to the UvrC family. In terms of assembly, interacts with UvrB in an incision complex.

It is found in the cytoplasm. In terms of biological role, the UvrABC repair system catalyzes the recognition and processing of DNA lesions. UvrC both incises the 5' and 3' sides of the lesion. The N-terminal half is responsible for the 3' incision and the C-terminal half is responsible for the 5' incision. The polypeptide is UvrABC system protein C (Clostridium acetobutylicum (strain ATCC 824 / DSM 792 / JCM 1419 / IAM 19013 / LMG 5710 / NBRC 13948 / NRRL B-527 / VKM B-1787 / 2291 / W)).